We begin with the raw amino-acid sequence, 245 residues long: Type III pantothenate kinase (245 aa).

6–13 (DQGNTILK) provides a ligand contact to ATP. Residues Tyr-86 and 93-96 (GTDR) each bind substrate. Asp-95 functions as the Proton acceptor in the catalytic mechanism. Asp-116 contacts K(+). Thr-119 contacts ATP. Substrate is bound at residue Thr-171.

It belongs to the type III pantothenate kinase family. As to quaternary structure, homodimer. The cofactor is NH4(+). K(+) serves as cofactor.

Its subcellular location is the cytoplasm. It catalyses the reaction (R)-pantothenate + ATP = (R)-4'-phosphopantothenate + ADP + H(+). It participates in cofactor biosynthesis; coenzyme A biosynthesis; CoA from (R)-pantothenate: step 1/5. Its function is as follows. Catalyzes the phosphorylation of pantothenate (Pan), the first step in CoA biosynthesis. The protein is Type III pantothenate kinase of Azobacteroides pseudotrichonymphae genomovar. CFP2.